We begin with the raw amino-acid sequence, 332 residues long: Probable ABC transporter permease protein YphD (332 aa).

10 helical membrane passes run 28–48 (GLLV…PGFI), 63–83 (IGIA…DVSV), 84–104 (GPMV…EVPL), 105–125 (AVAC…AGVL), 131–151 (VPSF…GLFM), 172–192 (FLGV…FVFI), 222–242 (VRIL…ILLA), 251–271 (GAAN…GTAL), 278–298 (LFGT…LVLL), and 303–323 (FFQQ…NILL).

It belongs to the binding-protein-dependent transport system permease family. AraH/RbsC subfamily.

Its subcellular location is the cell inner membrane. Probably part of the binding-protein-dependent transport system YphDEF. Probably responsible for the translocation of the substrate across the membrane. The sequence is that of Probable ABC transporter permease protein YphD (yphD) from Escherichia coli (strain K12).